The sequence spans 257 residues: UPF0246 protein VCM66_2278 (257 aa).

This sequence belongs to the UPF0246 family.

The protein is UPF0246 protein VCM66_2278 of Vibrio cholerae serotype O1 (strain M66-2).